The chain runs to 188 residues: UPF0461 protein C5orf24 (188 aa).

A compositionally biased stretch (polar residues) spans 1 to 10 (MMHPVASSNP). The interval 1–20 (MMHPVASSNPAFCGPGKPSC) is disordered. S37 is subject to Phosphoserine. K75 participates in a covalent cross-link: Glycyl lysine isopeptide (Lys-Gly) (interchain with G-Cter in SUMO2). The interval 79 to 142 (KKKKNLNRSG…GYKVSPGRPP (64 aa)) is disordered. Over residues 80–92 (KKKNLNRSGKRGR) the composition is skewed to basic residues. The segment covering 94–107 (SGTTKSAGYRTSTG) has biased composition (polar residues). A phosphoserine mark is found at S121 and S180. K184 is covalently cross-linked (Glycyl lysine isopeptide (Lys-Gly) (interchain with G-Cter in SUMO2)).

This sequence belongs to the UPF0461 family.

The polypeptide is UPF0461 protein C5orf24 (C5orf24) (Homo sapiens (Human)).